The following is a 318-amino-acid chain: NADH-ubiquinone oxidoreductase chain 1 (318 aa).

Transmembrane regions (helical) follow at residues 2 to 22, 68 to 88, 100 to 120, 146 to 166, 171 to 191, 231 to 251, 253 to 273, and 294 to 314; these read PMANLLLLIVPILIAMAFLML, ITLYITAPTLALTIALLLWTP, LGLLFILATSSLAVYSILWSG, LAIILLSTLLMSGSFNLSTLI, HLWLLLPSWPLAMMWFISTLA, IIMMNTLTTTIFLGTTYDALS, ELYTTYFVTKTLLLTSLFLWI, and LPLTLALLMWYVSMPITISSI.

This sequence belongs to the complex I subunit 1 family. In terms of assembly, core subunit of respiratory chain NADH dehydrogenase (Complex I) which is composed of 45 different subunits.

The protein localises to the mitochondrion inner membrane. It catalyses the reaction a ubiquinone + NADH + 5 H(+)(in) = a ubiquinol + NAD(+) + 4 H(+)(out). In terms of biological role, core subunit of the mitochondrial membrane respiratory chain NADH dehydrogenase (Complex I) which catalyzes electron transfer from NADH through the respiratory chain, using ubiquinone as an electron acceptor. Essential for the catalytic activity and assembly of complex I. This chain is NADH-ubiquinone oxidoreductase chain 1 (MT-ND1), found in Homo sapiens (Human).